Consider the following 215-residue polypeptide: Probable transaldolase (215 aa).

K83 functions as the Schiff-base intermediate with substrate in the catalytic mechanism.

The protein belongs to the transaldolase family. Type 3B subfamily.

It localises to the cytoplasm. It catalyses the reaction D-sedoheptulose 7-phosphate + D-glyceraldehyde 3-phosphate = D-erythrose 4-phosphate + beta-D-fructose 6-phosphate. Its pathway is carbohydrate degradation; pentose phosphate pathway; D-glyceraldehyde 3-phosphate and beta-D-fructose 6-phosphate from D-ribose 5-phosphate and D-xylulose 5-phosphate (non-oxidative stage): step 2/3. Transaldolase is important for the balance of metabolites in the pentose-phosphate pathway. This chain is Probable transaldolase, found in Bdellovibrio bacteriovorus (strain ATCC 15356 / DSM 50701 / NCIMB 9529 / HD100).